The primary structure comprises 247 residues: ATP synthase subunit a, chloroplastic (247 aa).

Helical transmembrane passes span glycine 36–glycine 56, valine 95–valine 115, isoleucine 134–serine 154, leucine 199–leucine 219, and glycine 220–glycine 240.

This sequence belongs to the ATPase A chain family. In terms of assembly, F-type ATPases have 2 components, CF(1) - the catalytic core - and CF(0) - the membrane proton channel. CF(1) has five subunits: alpha(3), beta(3), gamma(1), delta(1), epsilon(1). CF(0) has four main subunits: a, b, b' and c.

It is found in the plastid. It localises to the chloroplast thylakoid membrane. Its function is as follows. Key component of the proton channel; it plays a direct role in the translocation of protons across the membrane. The polypeptide is ATP synthase subunit a, chloroplastic (Mesostigma viride (Green alga)).